Here is a 458-residue protein sequence, read N- to C-terminus: Probable alpha-L-glutamate ligase (458 aa).

The unknown stretch occupies residues 1 to 162 (MSDNKFIIGS…YGVKSAKKSG (162 aa)). Residues 163 to 458 (LKIGLLASNP…IEKKLGWKAE (296 aa)) form an alpha-L-glutamate ligase region. The ATP-grasp domain occupies 267-450 (LQLLQKNNLD…IAGAMIDSIE (184 aa)). ATP-binding positions include Lys-304, 341–342 (EF), Asp-350, and 374–376 (RAN). Mg(2+) is bound by residues Asp-411, Glu-423, and Asn-425. Mn(2+) is bound by residues Asp-411, Glu-423, and Asn-425.

In the C-terminal section; belongs to the RimK family. Requires Mg(2+) as cofactor. It depends on Mn(2+) as a cofactor.

This is Probable alpha-L-glutamate ligase from Shewanella halifaxensis (strain HAW-EB4).